A 637-amino-acid polypeptide reads, in one-letter code: 1-deoxy-D-xylulose-5-phosphate synthase (637 aa).

Thiamine diphosphate-binding positions include histidine 74 and 115–117 (GHS). Aspartate 146 contacts Mg(2+). Thiamine diphosphate-binding positions include 147–148 (GA), asparagine 175, tyrosine 285, and glutamate 366. Residue asparagine 175 coordinates Mg(2+).

Belongs to the transketolase family. DXPS subfamily. Homodimer. Mg(2+) is required as a cofactor. It depends on thiamine diphosphate as a cofactor.

It carries out the reaction D-glyceraldehyde 3-phosphate + pyruvate + H(+) = 1-deoxy-D-xylulose 5-phosphate + CO2. It functions in the pathway metabolic intermediate biosynthesis; 1-deoxy-D-xylulose 5-phosphate biosynthesis; 1-deoxy-D-xylulose 5-phosphate from D-glyceraldehyde 3-phosphate and pyruvate: step 1/1. In terms of biological role, catalyzes the acyloin condensation reaction between C atoms 2 and 3 of pyruvate and glyceraldehyde 3-phosphate to yield 1-deoxy-D-xylulose-5-phosphate (DXP). The chain is 1-deoxy-D-xylulose-5-phosphate synthase from Pelotomaculum thermopropionicum (strain DSM 13744 / JCM 10971 / SI).